The following is an 846-amino-acid chain: Translation initiation factor IF-2 (846 aa).

The disordered stretch occupies residues 198-219 (YKREEEEKKSKAKKAGGKGFKK). Positions 207 to 219 (SKAKKAGGKGFKK) are enriched in basic residues. Residues 345–512 (SRAPVVTIMG…AVLLQSEVLE (168 aa)) enclose the tr-type G domain. The G1 stretch occupies residues 354-361 (GHVDHGKT). 354–361 (GHVDHGKT) contributes to the GTP binding site. A G2 region spans residues 379–383 (GITQH). The tract at residues 400-403 (DTPG) is G3. GTP is bound by residues 400–404 (DTPGH) and 454–457 (NKID). The interval 454-457 (NKID) is G4. Positions 490–492 (SAK) are G5.

This sequence belongs to the TRAFAC class translation factor GTPase superfamily. Classic translation factor GTPase family. IF-2 subfamily.

It is found in the cytoplasm. Its function is as follows. One of the essential components for the initiation of protein synthesis. Protects formylmethionyl-tRNA from spontaneous hydrolysis and promotes its binding to the 30S ribosomal subunits. Also involved in the hydrolysis of GTP during the formation of the 70S ribosomal complex. The chain is Translation initiation factor IF-2 from Francisella tularensis subsp. novicida (strain U112).